The following is a 399-amino-acid chain: Probable inactive 2-oxoglutarate-dependent dioxygenase AOP2 (399 aa).

In terms of domain architecture, Fe2OG dioxygenase spans 248–345 (GGDDVEANDD…RYTAAIFTCP (98 aa)). Fe cation is bound by residues His268, Asp270, and His325. Arg336 provides a ligand contact to 2-oxoglutarate.

This sequence belongs to the iron/ascorbate-dependent oxidoreductase family. The cofactor is Fe(2+).

This Arabidopsis thaliana (Mouse-ear cress) protein is Probable inactive 2-oxoglutarate-dependent dioxygenase AOP2 (AOP2).